Here is a 254-residue protein sequence, read N- to C-terminus: Putative biopolymer transport protein ExbB-like 1 (254 aa).

The next 3 membrane-spanning stretches (helical) occupy residues 39-59 (GGVV…TAFE), 141-161 (LETI…TGLI), and 185-205 (IGEA…ALLV).

This sequence belongs to the ExbB/TolQ family.

The protein resides in the cell inner membrane. Involved in the TonB-dependent energy-dependent transport of various receptor-bound substrates. Protects ExbD from proteolytic degradation and functionally stabilizes TonB. The protein is Putative biopolymer transport protein ExbB-like 1 of Synechocystis sp. (strain ATCC 27184 / PCC 6803 / Kazusa).